Consider the following 423-residue polypeptide: Elongation factor 1-alpha (423 aa).

Residues 5–221 (KEHINVAFIG…DLLKPPEKLV (217 aa)) enclose the tr-type G domain. The segment at 14 to 21 (GHVDHGKS) is G1. Residue 14 to 21 (GHVDHGKS) coordinates GTP. Residue Ser-21 coordinates Mg(2+). The tract at residues 70 to 74 (GVTID) is G2. The segment at 91 to 94 (DCPG) is G3. GTP contacts are provided by residues 91-95 (DCPGH) and 146-149 (NKMD). The tract at residues 146–149 (NKMD) is G4. Residues 185-187 (SAY) form a G5 region.

Belongs to the TRAFAC class translation factor GTPase superfamily. Classic translation factor GTPase family. EF-Tu/EF-1A subfamily.

The protein resides in the cytoplasm. The catalysed reaction is GTP + H2O = GDP + phosphate + H(+). Functionally, GTP hydrolase that promotes the GTP-dependent binding of aminoacyl-tRNA to the A-site of ribosomes during protein biosynthesis. The polypeptide is Elongation factor 1-alpha (Archaeoglobus fulgidus (strain ATCC 49558 / DSM 4304 / JCM 9628 / NBRC 100126 / VC-16)).